The chain runs to 68 residues: Large ribosomal subunit protein bL31 (68 aa).

Residues Cys-16, Cys-18, Cys-38, and Cys-41 each contribute to the Zn(2+) site.

It belongs to the bacterial ribosomal protein bL31 family. Type A subfamily. As to quaternary structure, part of the 50S ribosomal subunit. It depends on Zn(2+) as a cofactor.

Its function is as follows. Binds the 23S rRNA. The sequence is that of Large ribosomal subunit protein bL31 from Thiobacillus denitrificans (strain ATCC 25259 / T1).